Consider the following 179-residue polypeptide: Inner membrane-spanning protein YciB (179 aa).

The next 5 membrane-spanning stretches (helical) occupy residues 22–42 (IYAA…YTWI), 50–70 (MALI…FFHN), 76–96 (WKVT…QWVM), 121–141 (IAWA…AFWM), and 149–169 (FKVF…GVYI).

Belongs to the YciB family.

It localises to the cell inner membrane. In terms of biological role, plays a role in cell envelope biogenesis, maintenance of cell envelope integrity and membrane homeostasis. In Enterobacter sp. (strain 638), this protein is Inner membrane-spanning protein YciB.